Reading from the N-terminus, the 97-residue chain is M-zodatoxin-Lt7a (97 aa).

Positions 1–22 (MKFYVVALALLVAFVCIAESRS) are cleaved as a signal peptide. A propeptide spanning residues 23-63 (VETERAVDADLEDDLDDLEEYLEGIAEALELEDFPDTEEAR) is cleaved from the precursor. The Processing quadruplet motif signature appears at 60 to 63 (EEAR).

Cleavage of the propeptide depends on the processing quadruplet motif (XXXR, with at least one of X being E). As to expression, expressed by the venom gland.

It is found in the secreted. Its function is as follows. Does not have antimicrobial or antifungal activity. Does not have hemolytic activity against rabbit erythrocytes. However, it causes some conductance changes in planar bilayer membranes, without membrane rupture, suggesting a cytolytic function on other biological targets. It causes paralysis, but is not lethal when injected into insect (M.domestica) larvae. In Lachesana tarabaevi (Spider), this protein is M-zodatoxin-Lt7a.